The sequence spans 233 residues: Aspartate/glutamate leucyltransferase (233 aa).

The protein belongs to the R-transferase family. Bpt subfamily.

Its subcellular location is the cytoplasm. The catalysed reaction is N-terminal L-glutamyl-[protein] + L-leucyl-tRNA(Leu) = N-terminal L-leucyl-L-glutamyl-[protein] + tRNA(Leu) + H(+). It carries out the reaction N-terminal L-aspartyl-[protein] + L-leucyl-tRNA(Leu) = N-terminal L-leucyl-L-aspartyl-[protein] + tRNA(Leu) + H(+). Functions in the N-end rule pathway of protein degradation where it conjugates Leu from its aminoacyl-tRNA to the N-termini of proteins containing an N-terminal aspartate or glutamate. This Vibrio campbellii (strain ATCC BAA-1116) protein is Aspartate/glutamate leucyltransferase.